We begin with the raw amino-acid sequence, 742 residues long: Zinc finger protein 700 (742 aa).

The tract at residues 1–20 is disordered; it reads MPCCSHRSCREDPGTSESRE. A compositionally biased stretch (basic and acidic residues) spans 8-20; that stretch reads SCREDPGTSESRE. The region spanning 24 to 104 is the KRAB domain; the sequence is VAFEDVAVNF…KEDSHCGETF (81 aa). C2H2-type zinc fingers lie at residues 194-216, 222-244, 250-272, 278-300, 306-328, 362-384, 390-412, 418-440, and 446-468; these read YACKVCGKTFIFHSSIRRHMVMH, YKCKFCGKAFHSFSLYLIHERTH, YECKQCGKSFTYSATLQIHERTH, YECSKCDKAFHSSSSYHRHERSH, YQCKECGKAFAYTSSLRRHERTH, YKCKICGKGFYSAKSFQTHEKTH, YKCKQCGKAFNLSSSFRYHERIH, YECKQCGKAFRSASQLRVHGGTH, and YECKECGKAFRSTSHLRVHGRTH. The segment at 474 to 502 adopts a C2H2-type 10; degenerate zinc-finger fold; sequence YECKECGKAFRYVKHLQIHERTEKHIRMP. 8 consecutive C2H2-type zinc fingers follow at residues 508–530, 536–558, 564–586, 592–614, 620–642, 648–670, 676–698, and 704–726; these read YKCSICEKGFYSAKSFQTHEKTH, YECNQCGKAFRCCNSLRYHERTH, YECKQCGKAFRSASHLRMHERTH, YECKQCGKAFSCASNLRKHGRTH, YECKQCGKAFRSASNLQMHERTH, YECKECEKAFCKFSSFQIHERKH, YECKHCGNGFTSAKILQIHARTH, and YECKECGKAFNYFSSLHIHARTH.

Belongs to the krueppel C2H2-type zinc-finger protein family.

It is found in the nucleus. In terms of biological role, may be involved in transcriptional regulation. This chain is Zinc finger protein 700 (ZNF700), found in Homo sapiens (Human).